The sequence spans 277 residues: Large ribosomal subunit protein uL2 (277 aa).

The disordered stretch occupies residues 219 to 277; sequence TVRGSVMNPNDHPHGGGEGKAPVGRKAPSTPWGKPALGLKTRNKKAKSDKLIVRRRNEK. Residues 264–277 are compositionally biased toward basic and acidic residues; the sequence is AKSDKLIVRRRNEK.

Belongs to the universal ribosomal protein uL2 family. As to quaternary structure, part of the 50S ribosomal subunit. Forms a bridge to the 30S subunit in the 70S ribosome.

In terms of biological role, one of the primary rRNA binding proteins. Required for association of the 30S and 50S subunits to form the 70S ribosome, for tRNA binding and peptide bond formation. It has been suggested to have peptidyltransferase activity; this is somewhat controversial. Makes several contacts with the 16S rRNA in the 70S ribosome. This Streptococcus sanguinis (strain SK36) protein is Large ribosomal subunit protein uL2.